The primary structure comprises 864 residues: Dynamin-1 (864 aa).

The 267-residue stretch at 28-294 (DLDLPQIAVV…LTNHIRDTLP (267 aa)) folds into the Dynamin-type G domain. Positions 38–45 (GGQSAGKS) are G1 motif. 7 residues coordinate GDP: Ser-41, Gly-43, Lys-44, Ser-45, Ser-46, Arg-59, and Gly-60. Positions 64-66 (VTR) are G2 motif. Tyr-80 bears the Phosphotyrosine mark. Tyr-125 is modified (3'-nitrotyrosine; alternate). Position 125 is a phosphotyrosine; alternate (Tyr-125). Positions 136-139 (DLPG) are G3 motif. The G4 motif stretch occupies residues 205 to 208 (TKLD). GDP contacts are provided by Lys-206, Asp-208, Asp-211, Asn-236, Arg-237, and Gln-239. Positions 235 to 238 (VNRS) are G5 motif. Phosphoserine is present on residues Ser-306 and Ser-347. Residue Tyr-354 is modified to Phosphotyrosine. Ser-512 bears the Phosphoserine mark. The region spanning 519–625 (LVIRKGWLTI…WKASFLRAGV (107 aa)) is the PH domain. The region spanning 659-750 (VETIRNLVDS…IIGDINTTTV (92 aa)) is the GED domain. A disordered region spans residues 767–864 (SVPAGRRSPT…PESPRPPFDL (98 aa)). A Phosphoserine; by CDK5 modification is found at Ser-774. At Ser-778 the chain carries Phosphoserine. Arg-796 is modified (omega-N-methylarginine). Position 822 is a phosphoserine (Ser-822). The segment covering 825-843 (PFGPPPQVPSRPNRAPPGV) has biased composition (pro residues). Ser-851 and Ser-857 each carry phosphoserine.

This sequence belongs to the TRAFAC class dynamin-like GTPase superfamily. Dynamin/Fzo/YdjA family. Homodimer; homodimerization is mediated by the dynamin-type G domain which promotes assembly-stimulated GTPase activity. Homo-tetramer formed from two dimers in the absence of lipid. Oligomerizes into a helical polymer that self-assembles around the vesicle membrane, when associated to the menbrane through lipid binding. Interacts (via C-terminal proline-rich domain (PRD)) with SNX9 (via SH3 domain); this interaction allows regulation of DNM1 self-assembly during late stages of endocytic vesicle formation and supports DNM1's early functions in accelerating clathrin-coated pits (CCPs) maturation in non neuronals cell. Interacts (via C-terminal proline-rich domain (PRD)) with MYO1E (via SH3 domain); this interaction regulates receptor-mediated endocytosis. Interacts with SNX33 (via SH3 domain); this interaction decreases DNM1-dependent endocytosis. Interacts with DIAPH1. Interacts with GRB2 (via SH3 domain); this interaction mediates disassembly of DNM1 polymers, therefore modulates self-assembly. Forms a complex with BIN1 (via SH3 domain) and SH3GL2 (via SH3 domain). Forms a complex with SH3GL2 (via SH3 domain) and AMPH (via SH3 domain). Forms a complex with SH3GL2 (via SH3 domain) and SYNJ1. Interacts with AMPH. Interacts (via C-terminal proline-rich domain (PRD)) with SYT1; this interaction facilitates vesicle fission during clathrin-mediated endocytosis (CME). Interacts (via C-terminal proline-rich domain (PRD)) with PLCG1 (via SH3 domain); this interaction stimulates the release of GDP from DNM1 and enhances DNM1-dependent endocytosis. Interacts with SNPH; this interaction inhibits the binding of DNM1 to AMPH and DNM1-receptor-mediated endocytosis. Interacts with CAV1. Interacts with SH3GLB1 (via SH3 domain). Interacts with PACSIN1 (via SH3 domain), PACSIN2 (via SH3 domain) and PACSIN3 (via SH3 domain). Interacts with UNC119; this interaction decreases DNM1's GTPase activity and affects DNM1's interaction with AMPH. Interacts (GTP-bound form) with DNAJC6; this interaction allows clathrin-coated vesicle (CCV) formation at the plasma membrane. Phosphorylation at Ser-774 by GSK3B/GSK3-beta leads to inactivation of receptor-mediated endocytosis in non-neuronal cells. Dephosphorylation at Ser-774, through the EGFR downstream signaling, leads to activation and regulates early stages of clathrin-mediated endocytosis (CME). Phosphorylated by CDK5 leading to synaptic vesicle endocytosis (SVE) activation. In terms of tissue distribution, brain-specific (peripheral sensory neurons).

It is found in the cytoplasmic vesicle. The protein localises to the clathrin-coated vesicle. It localises to the golgi apparatus. Its subcellular location is the cell membrane. The protein resides in the membrane. It is found in the clathrin-coated pit. The protein localises to the presynapse. It localises to the secretory vesicle. Its subcellular location is the chromaffin granule. The catalysed reaction is GTP + H2O = GDP + phosphate + H(+). Its function is as follows. Catalyzes the hydrolysis of GTP and utilizes this energy to mediate vesicle scission and participates in many forms of endocytosis, such as clathrin-mediated endocytosis or synaptic vesicle endocytosis as well as rapid endocytosis (RE). Associates to the membrane, through lipid binding, and self-assembles into rings and stacks of interconnected rings through oligomerization to form a helical polymer around the vesicle membrane leading to constriction of invaginated coated pits around their necks. Self-assembly of the helical polymer induces membrane tubules narrowing until the polymer reaches a length sufficient to trigger GTP hydrolysis. Depending on the curvature imposed on the tubules, membrane detachment from the helical polymer upon GTP hydrolysis can cause spontaneous hemifission followed by complete fission. May play a role in regulating early stages of clathrin-mediated endocytosis in non-neuronal cells through its activation by dephosphorylation via the signaling downstream of EGFR. Controls vesicle size at a step before fission, during formation of membrane pits, at hippocampal synapses. Controls plastic adaptation of the synaptic vesicle recycling machinery to high levels of activity. Mediates rapid endocytosis (RE), a Ca(2+)-dependent and clathrin- and K(+)-independent process in chromaffin cells. Microtubule-associated force-producing protein involved in producing microtubule bundles and able to bind and hydrolyze GTP. Through its interaction with DNAJC6, acts during the early steps of clathrin-coated vesicle (CCV) formation. The chain is Dynamin-1 (Dnm1) from Rattus norvegicus (Rat).